A 602-amino-acid chain; its full sequence is Aspartate--tRNA(Asp/Asn) ligase (602 aa).

Glutamate 170 contacts L-aspartate. The segment at glutamine 194–lysine 197 is aspartate. Residue arginine 216 participates in L-aspartate binding. ATP contacts are provided by residues arginine 216 to glutamate 218 and glutamine 225. L-aspartate is bound at residue histidine 448. Glutamate 482 is a binding site for ATP. Residue arginine 489 coordinates L-aspartate. Glycine 534–arginine 537 lines the ATP pocket. The disordered stretch occupies residues glycine 559–lysine 602. Residues glutamine 575 to lysine 602 are compositionally biased toward basic and acidic residues.

Belongs to the class-II aminoacyl-tRNA synthetase family. Type 1 subfamily. As to quaternary structure, homodimer.

It localises to the cytoplasm. It catalyses the reaction tRNA(Asx) + L-aspartate + ATP = L-aspartyl-tRNA(Asx) + AMP + diphosphate. Aspartyl-tRNA synthetase with relaxed tRNA specificity since it is able to aspartylate not only its cognate tRNA(Asp) but also tRNA(Asn). Reaction proceeds in two steps: L-aspartate is first activated by ATP to form Asp-AMP and then transferred to the acceptor end of tRNA(Asp/Asn). This Rhodococcus erythropolis (strain PR4 / NBRC 100887) protein is Aspartate--tRNA(Asp/Asn) ligase.